We begin with the raw amino-acid sequence, 269 residues long: Regulatory protein RecX (269 aa).

Belongs to the RecX family.

It is found in the cytoplasm. Its function is as follows. Modulates RecA activity. This Listeria monocytogenes serotype 4a (strain HCC23) protein is Regulatory protein RecX.